An 84-amino-acid polypeptide reads, in one-letter code: UPF0410 protein YmgE (84 aa).

The next 3 helical transmembrane spans lie at 1 to 21 (MGIIAWIIFGLIAGIIAKLIM), 27 to 47 (GGFFLTCILGIVGAVVGGWLA), and 58 to 78 (GFNLHSFLVAVVGAILVLGVF).

This sequence belongs to the UPF0410 family.

The protein resides in the cell inner membrane. This Escherichia coli O127:H6 (strain E2348/69 / EPEC) protein is UPF0410 protein YmgE (ymgE).